The chain runs to 226 residues: Purine nucleoside phosphorylase Cj1217c (226 aa).

Zn(2+) contacts are provided by histidine 58, cysteine 93, and histidine 109.

The protein belongs to the purine nucleoside phosphorylase YfiH/LACC1 family. Homodimer. Cu(2+) is required as a cofactor. The cofactor is Zn(2+).

The catalysed reaction is adenosine + phosphate = alpha-D-ribose 1-phosphate + adenine. The enzyme catalyses S-methyl-5'-thioadenosine + phosphate = 5-(methylsulfanyl)-alpha-D-ribose 1-phosphate + adenine. It carries out the reaction inosine + phosphate = alpha-D-ribose 1-phosphate + hypoxanthine. It catalyses the reaction adenosine + H2O + H(+) = inosine + NH4(+). Its function is as follows. Purine nucleoside enzyme that catalyzes the phosphorolysis of adenosine and inosine nucleosides, yielding D-ribose 1-phosphate and the respective free bases, adenine and hypoxanthine. Also catalyzes the phosphorolysis of S-methyl-5'-thioadenosine into adenine and S-methyl-5-thio-alpha-D-ribose 1-phosphate. Also has adenosine deaminase activity. The polypeptide is Purine nucleoside phosphorylase Cj1217c (Campylobacter jejuni subsp. jejuni serotype O:2 (strain ATCC 700819 / NCTC 11168)).